The primary structure comprises 522 residues: E3 ubiquitin-protein ligase TRIM65 (522 aa).

Position 2 is an N-acetylalanine (A2). The segment at 13–52 (CSICLGRYRDPVTLPCGHSFCGNCIQDSWRSCEKSCPECR) adopts an RING-type zinc-finger fold. The B box-type zinc finger occupies 92-134 (SHSARCLRHGRPLEFFCRTEGLCVCSACTVHDCSHHERALLDV). A coiled-coil region spans residues 141–229 (DQLRARVLVT…QRLTDHLRAL (89 aa)). The residue at position 187 (S187) is a Phosphoserine. One can recognise a B30.2/SPRY domain in the interval 316 to 509 (APVPSAVCPL…LTLCHQPEAT (194 aa)).

It belongs to the TRIM/RBCC family. In terms of assembly, homo-multimerizes. Interacts with ARRDC4.

The protein resides in the cytoplasm. The enzyme catalyses S-ubiquitinyl-[E2 ubiquitin-conjugating enzyme]-L-cysteine + [acceptor protein]-L-lysine = [E2 ubiquitin-conjugating enzyme]-L-cysteine + N(6)-ubiquitinyl-[acceptor protein]-L-lysine.. It functions in the pathway protein modification; protein ubiquitination. Functionally, E3 ubiquitin ligase that plays a role in several processes including innate immnity, autophagy or inflammation. Negatively regulates miRNAs by modulating the ubiquitination and stability of TNRC6A, a protein involved in RNA-mediated gene silencing by both micro-RNAs (miRNAs) and short interfering RNAs. This ubiquitination results in the suppressed expression of miR-138-5p leading to increased autophagy. Upon enteroviral infection, promotes 'Lys-63'-mediated ubiquitination activation of IFIH1/MDA5 leading to innate signaling cascade. Mechanistically, selectively recognizes MDA5 filaments that occur on dsRNAs. Also plays a role in limitation of inflammation through different mechanisms. First, promotes 'Lys-48'-mediated ubiquitination of VCAM1 leading to its degradation and limitation of LPS-induced lung inflammation. In addition, negatively regulates inflammasome activation by promoting 'lys48'-linked ubiquitination of NLRP3 which is critical for the inhibition of NLRP3 inflammasome activation in resting macrophages. This is E3 ubiquitin-protein ligase TRIM65 (Trim65) from Mus musculus (Mouse).